The following is a 254-amino-acid chain: 3-deoxy-manno-octulosonate cytidylyltransferase (254 aa).

The protein belongs to the KdsB family.

The protein resides in the cytoplasm. It carries out the reaction 3-deoxy-alpha-D-manno-oct-2-ulosonate + CTP = CMP-3-deoxy-beta-D-manno-octulosonate + diphosphate. It functions in the pathway nucleotide-sugar biosynthesis; CMP-3-deoxy-D-manno-octulosonate biosynthesis; CMP-3-deoxy-D-manno-octulosonate from 3-deoxy-D-manno-octulosonate and CTP: step 1/1. Its pathway is bacterial outer membrane biogenesis; lipopolysaccharide biosynthesis. Its function is as follows. Activates KDO (a required 8-carbon sugar) for incorporation into bacterial lipopolysaccharide in Gram-negative bacteria. This is 3-deoxy-manno-octulosonate cytidylyltransferase from Bordetella bronchiseptica (strain ATCC BAA-588 / NCTC 13252 / RB50) (Alcaligenes bronchisepticus).